Reading from the N-terminus, the 396-residue chain is Probable circularly permuted 1,3-beta-glucanase YJL171C (396 aa).

The first 19 residues, 1 to 19 (MLQSIVLSVCMFMLHTVAA), serve as a signal peptide directing secretion. N51, N99, N122, N146, N174, N219, and N249 each carry an N-linked (GlcNAc...) asparagine glycan. An ExDxxE motif motif is present at residues 259–264 (EYDIFE). N267, N300, N328, and N346 each carry an N-linked (GlcNAc...) asparagine glycan. Residue N368 is the site of GPI-anchor amidated asparagine attachment. A propeptide spans 369 to 396 (GVALTKMQNGVWYYILAIFTAFTQVVLI) (removed in mature form).

Belongs to the PGA52 family. Post-translationally, extensively N-glycosylated.

The protein localises to the cell membrane. The catalysed reaction is Hydrolysis of (1-&gt;3)-beta-D-glucosidic linkages in (1-&gt;3)-beta-D-glucans.. Its function is as follows. Probable circularly permuted 1,3-beta-glucanase involved in cell wall modification through beta-1,3-glucan network alterations such as increased branching or remodeling. The chain is Probable circularly permuted 1,3-beta-glucanase YJL171C (TOH1) from Saccharomyces cerevisiae (strain ATCC 204508 / S288c) (Baker's yeast).